Consider the following 309-residue polypeptide: Pyridoxal 5'-phosphate synthase subunit PDX1.3 (309 aa).

Met-1 is modified (N-acetylmethionine). Asp-40 lines the D-ribose 5-phosphate pocket. Lys-97 serves as the catalytic Schiff-base intermediate with D-ribose 5-phosphate. Gly-169 is a binding site for D-ribose 5-phosphate. Position 181 (Arg-181) interacts with D-glyceraldehyde 3-phosphate. Residues Gly-230 and 251-252 (GS) contribute to the D-ribose 5-phosphate site.

This sequence belongs to the PdxS/SNZ family. As to quaternary structure, homodimer or heterodimer with PDX1.1 or PDX1.2. Interacts with PDX2. As to expression, expressed in cotyledons, rapidly dividing root stele tissues, stems, leaves, flowers, mature pollen, and siliques.

It localises to the cytoplasm. Its subcellular location is the cell membrane. It is found in the membrane. It catalyses the reaction aldehydo-D-ribose 5-phosphate + D-glyceraldehyde 3-phosphate + L-glutamine = pyridoxal 5'-phosphate + L-glutamate + phosphate + 3 H2O + H(+). It participates in cofactor biosynthesis; pyridoxal 5'-phosphate biosynthesis. Catalyzes the formation of pyridoxal 5'-phosphate from ribose 5-phosphate (RBP), glyceraldehyde 3-phosphate (G3P) and ammonia. The ammonia is provided by PDX2. Can also use ribulose 5-phosphate and dihydroxyacetone phosphate as substrates, resulting from enzyme-catalyzed isomerization of RBP and G3P, respectively. Also plays an indirect role in resistance to singlet oxygen-generating photosensitizers. The sequence is that of Pyridoxal 5'-phosphate synthase subunit PDX1.3 (PDX13) from Arabidopsis thaliana (Mouse-ear cress).